Here is a 353-residue protein sequence, read N- to C-terminus: MEELHIYPSDNYTEEDLGSGDYDSMKEPCFREENAHFNRIFLPTVYSIIFLTGIVGNGLVILVMGYQKKLRSMTDKYRLHLSVADLLFVLTLPFWAVEAVANWYFGNFLCKAVHVIYTVNLYSSVLILAFISLDRYLAIVHATNSQRPRKLLAEKVVYVGVWIPALLLTIPDFIFANVREADDRYICDRFYPNDSWLVVFQFQHIMVGLILPGIVILSCYCIIISKLSHSKGYQKRKALKTTVILILAFFACWLPYYIGISIDSFILLEIIKQGCEFEKTVHKWISITEALAFFHCCLNPILYAFLGAKFKTSAQHALTSVSRGSSLKILSKGKRGGHSSVSTESESSSFHSS.

An important for chemokine binding and signaling region spans residues 1–22 (MEELHIYPSDNYTEEDLGSGDY). Residues 1 to 39 (MEELHIYPSDNYTEEDLGSGDYDSMKEPCFREENAHFNR) lie on the Extracellular side of the membrane. Position 7 is a sulfotyrosine (Y7). N-linked (GlcNAc...) asparagine glycosylation occurs at N11. Position 12 is a sulfotyrosine (Y12). A glycan (O-linked (Xyl...) (chondroitin sulfate) serine) is linked at S19. At Y22 the chain carries Sulfotyrosine. 2 disulfides stabilise this stretch: C29–C275 and C110–C187. The helical transmembrane segment at 40–64 (IFLPTVYSIIFLTGIVGNGLVILVM) threads the bilayer. At 65 to 78 (GYQKKLRSMTDKYR) the chain is on the cytoplasmic side. A helical membrane pass occupies residues 79 to 100 (LHLSVADLLFVLTLPFWAVEAV). A chemokine binding region spans residues 95-98 (WAVE). Residues 101-111 (ANWYFGNFLCK) are Extracellular-facing. A helical membrane pass occupies residues 112–131 (AVHVIYTVNLYSSVLILAFI). A chemokine binding region spans residues 114–118 (HVIYT). Topologically, residues 132–155 (SLDRYLAIVHATNSQRPRKLLAEK) are cytoplasmic. Positions 134–136 (DRY) match the Important for signaling motif. Residues 136 to 148 (YLAIVHATNSQRP) are involved in dimerization; when bound to chemokine. Residues 156–175 (VVYVGVWIPALLLTIPDFIF) form a helical membrane-spanning segment. Residues 176-196 (ANVREADDRYICDRFYPNDSW) are Extracellular-facing. Residues 187 to 191 (CDRFY) form a chemokine binding, important for signaling region. The segment at 192–211 (PNDSWLVVFQFQHIMVGLIL) is involved in dimerization. Residues 197–217 (LVVFQFQHIMVGLILPGIVIL) traverse the membrane as a helical segment. The Cytoplasmic portion of the chain corresponds to 218-242 (SCYCIIISKLSHSKGYQKRKALKTT). The chain crosses the membrane as a helical span at residues 243–262 (VILILAFFACWLPYYIGISI). At 263 to 283 (DSFILLEIIKQGCEFEKTVHK) the chain is on the extracellular side. The involved in dimerization stretch occupies residues 267–269 (LLE). A helical transmembrane segment spans residues 284–303 (WISITEALAFFHCCLNPILY). Residues 304–353 (AFLGAKFKTSAQHALTSVSRGSSLKILSKGKRGGHSSVSTESESSSFHSS) lie on the Cytoplasmic side of the membrane. Phosphoserine is present on residues S320 and S322. A phosphoserine; by PKC and GRK6 mark is found at S325 and S326. The segment at 330-353 (LSKGKRGGHSSVSTESESSSFHSS) is disordered. The residue at position 331 (S331) is a Phosphoserine; by GRK6. K332 is covalently cross-linked (Glycyl lysine isopeptide (Lys-Gly) (interchain with G-Cter in ubiquitin)). A compositionally biased stretch (low complexity) spans 338–353 (HSSVSTESESSSFHSS). S340 bears the Phosphoserine; by GRK6 mark. Phosphoserine is present on residues S349 and S352.

Belongs to the G-protein coupled receptor 1 family. Monomer. Can form homodimers. Interacts with CD164. Interacts with ARRB2; the interaction is dependent on the C-terminal phosphorylation of CXCR4 and allows activation of MAPK1 and MAPK3. Interacts with ARR3; the interaction is dependent on the C-terminal phosphorylation of CXCR4 and modulates calcium mobilization. Interacts with RNF113A; the interaction, enhanced by CXCL12, promotes CXCR4 ubiquitination and subsequent degradation. Interacts (via the cytoplasmic C-terminal) with ITCH (via the WW domains I and II); the interaction, enhanced by CXCL12, promotes CXCR4 ubiquitination and leads to its degradation. Interacts with extracellular ubiquitin. Interacts with DBN1; this interaction is enhanced by antigenic stimulation. Following LPS binding, may form a complex with GDF5, HSP90AA1 and HSPA8. Post-translationally, phosphorylated on agonist stimulation. Rapidly phosphorylated on serine and threonine residues in the C-terminal. Phosphorylation at Ser-325 and Ser-326 leads to recruitment of ITCH, ubiquitination and protein degradation. In terms of processing, ubiquitinated after ligand binding, leading to its degradation. Ubiquitinated by ITCH at the cell membrane on agonist stimulation. The ubiquitin-dependent mechanism, endosomal sorting complex required for transport (ESCRT), then targets CXCR4 for lysosomal degradation. This process is dependent also on prior Ser-/Thr-phosphorylation in the C-terminal of CXCR4. Also binding of ARRB1 to STAM negatively regulates CXCR4 sorting to lysosomes though modulating ubiquitination of SFR5S. Sulfation is required for efficient binding of CXCL12/SDF-1alpha and promotes its dimerization. Post-translationally, O- and N-glycosylated. N-glycosylation can mask coreceptor function. The O-glycosylation chondroitin sulfate attachment does not affect interaction with CXCL12/SDF-1alpha nor its coreceptor activity.

The protein localises to the cell membrane. It is found in the cell junction. Its subcellular location is the early endosome. The protein resides in the late endosome. It localises to the lysosome. In terms of biological role, receptor for the C-X-C chemokine CXCL12/SDF-1 that transduces a signal by increasing intracellular calcium ion levels and enhancing MAPK1/MAPK3 activation. Involved in the AKT signaling cascade. Plays a role in regulation of cell migration, e.g. during wound healing. Acts as a receptor for extracellular ubiquitin; leading to enhanced intracellular calcium ions and reduced cellular cAMP levels. Binds bacterial lipopolysaccharide (LPS) et mediates LPS-induced inflammatory response, including TNF secretion by monocytes. Involved in hematopoiesis and in cardiac ventricular septum formation. Also plays an essential role in vascularization of the gastrointestinal tract, probably by regulating vascular branching and/or remodeling processes in endothelial cells. Involved in cerebellar development. In the CNS, could mediate hippocampal-neuron survival. This Canis lupus familiaris (Dog) protein is C-X-C chemokine receptor type 4 (CXCR4).